Reading from the N-terminus, the 265-residue chain is Putative methyltransferase 235L (265 aa).

The first 17 residues, 1-17 (MDICICYFFTILTTISC), serve as a signal peptide directing secretion.

The protein belongs to the methyltransferase superfamily.

This chain is Putative methyltransferase 235L, found in Acheta domesticus (House cricket).